The following is a 294-amino-acid chain: ATP synthase gamma chain (294 aa).

This sequence belongs to the ATPase gamma chain family. As to quaternary structure, F-type ATPases have 2 components, CF(1) - the catalytic core - and CF(0) - the membrane proton channel. CF(1) has five subunits: alpha(3), beta(3), gamma(1), delta(1), epsilon(1). CF(0) has three main subunits: a, b and c.

The protein localises to the cell inner membrane. In terms of biological role, produces ATP from ADP in the presence of a proton gradient across the membrane. The gamma chain is believed to be important in regulating ATPase activity and the flow of protons through the CF(0) complex. This chain is ATP synthase gamma chain, found in Rhizobium leguminosarum bv. trifolii (strain WSM2304).